The following is a 208-amino-acid chain: Translation initiation factor 2 subunit beta (208 aa).

The TRAM domain occupies glycine 144 to serine 202.

The protein belongs to the eIF-2-beta/eIF-5 family. In terms of assembly, heterotrimer composed of an alpha, a beta and a gamma chain.

Its function is as follows. eIF-2 functions in the early steps of protein synthesis by forming a ternary complex with GTP and initiator tRNA. The protein is Translation initiation factor 2 subunit beta (eif2b) of Thermoplasma volcanium (strain ATCC 51530 / DSM 4299 / JCM 9571 / NBRC 15438 / GSS1).